The chain runs to 268 residues: Interleukin-2 receptor subunit alpha (268 aa).

The first 21 residues, Met-1–Ala-21, serve as a signal peptide directing secretion. Residues Glu-22 to Ser-79 enclose the Sushi 1 domain. Residues Glu-22 to Lys-236 are Extracellular-facing. 3 disulfides stabilise this stretch: Cys-24-Cys-66, Cys-49-Cys-75, and Cys-51-Cys-77. N-linked (GlcNAc...) asparagine glycosylation is found at Asn-33 and Asn-43. The segment at Arg-86–Thr-109 is disordered. The span at Gln-88–Thr-109 shows a compositional bias: polar residues. Asn-116 carries N-linked (GlcNAc...) asparagine glycosylation. In terms of domain architecture, Sushi 2 spans Gly-119–Asp-182. 2 cysteine pairs are disulfide-bonded: Cys-121-Cys-164 and Cys-148-Cys-180. A disordered region spans residues Phe-189 to Pro-219. The span at Glu-193 to Ile-211 shows a compositional bias: polar residues. A helical transmembrane segment spans residues Val-237–Trp-257. Over Gln-258–Ile-268 the chain is Cytoplasmic.

Non-covalent dimer of an alpha and a beta subunit. IL2R exists in 3 different forms: a high affinity dimer, an intermediate affinity monomer (beta subunit), and a low affinity monomer (alpha subunit). The high and intermediate affinity forms also associate with a gamma subunit.

Its subcellular location is the membrane. Functionally, receptor for interleukin-2. The receptor is involved in the regulation of immune tolerance by controlling regulatory T cells (TREGs) activity. TREGs suppress the activation and expansion of autoreactive T-cells. This Mus musculus (Mouse) protein is Interleukin-2 receptor subunit alpha (Il2ra).